The primary structure comprises 346 residues: NADH-quinone oxidoreductase subunit H (346 aa).

Transmembrane regions (helical) follow at residues 13 to 33 (ILLI…ALAF), 51 to 71 (PNVV…KYIV), 83 to 103 (AVYF…WAVI), 116 to 136 (VAVL…IMGG), 162 to 182 (IGLI…TAIV), 191 to 211 (LLNW…ISAL), 244 to 264 (FMIG…LLFF), 278 to 298 (VFWM…VKAI), and 310 to 330 (LGWK…AFMA).

This sequence belongs to the complex I subunit 1 family. NDH-1 is composed of 14 different subunits. Subunits NuoA, H, J, K, L, M, N constitute the membrane sector of the complex.

The protein resides in the cell inner membrane. The enzyme catalyses a quinone + NADH + 5 H(+)(in) = a quinol + NAD(+) + 4 H(+)(out). In terms of biological role, NDH-1 shuttles electrons from NADH, via FMN and iron-sulfur (Fe-S) centers, to quinones in the respiratory chain. The immediate electron acceptor for the enzyme in this species is believed to be ubiquinone. Couples the redox reaction to proton translocation (for every two electrons transferred, four hydrogen ions are translocated across the cytoplasmic membrane), and thus conserves the redox energy in a proton gradient. This subunit may bind ubiquinone. The sequence is that of NADH-quinone oxidoreductase subunit H from Jannaschia sp. (strain CCS1).